Here is a 196-residue protein sequence, read N- to C-terminus: Peptide deformylase (196 aa).

Fe cation-binding residues include Cys97 and His139. Residue Glu140 is part of the active site. His143 is a binding site for Fe cation. Basic and acidic residues predominate over residues 171–187 (LDAQEPKRAPHSPHTDA). Residues 171 to 196 (LDAQEPKRAPHSPHTDAQKPGAASDL) form a disordered region.

The protein belongs to the polypeptide deformylase family. Fe(2+) serves as cofactor.

The catalysed reaction is N-terminal N-formyl-L-methionyl-[peptide] + H2O = N-terminal L-methionyl-[peptide] + formate. In terms of biological role, removes the formyl group from the N-terminal Met of newly synthesized proteins. Requires at least a dipeptide for an efficient rate of reaction. N-terminal L-methionine is a prerequisite for activity but the enzyme has broad specificity at other positions. This chain is Peptide deformylase, found in Methylocella silvestris (strain DSM 15510 / CIP 108128 / LMG 27833 / NCIMB 13906 / BL2).